Consider the following 891-residue polypeptide: Kinesin-like protein KIN-UB (891 aa).

A disordered region spans residues 1–54; the sequence is MSGKVANATPKAAAGKPRLSAAGGGAYRRTSSGPLPSAGGGGGRASSESGVSSR. The segment covering 45–54 has biased composition (low complexity); the sequence is ASSESGVSSR. The region spanning 54 to 400 is the Kinesin motor domain; that stretch reads RVRVAVRLRP…IMFGQRAMKV (347 aa). 139–146 provides a ligand contact to ATP; sequence GQTGTGKT. The short motif at 370-378 is the D-BOX element; sequence RTSLVVTIG. Positions 502–592 form a coiled coil; the sequence is TSSEVGEVQN…ADETRRSLDR (91 aa). Basic and acidic residues predominate over residues 586-595; that stretch reads TRRSLDRGDG. A disordered region spans residues 586-626; it reads TRRSLDRGDGSGKIFPGFDSLMSHSRNSQPREQSNGPKPPI. Residues 607–621 are compositionally biased toward polar residues; the sequence is MSHSRNSQPREQSNG. 4 ARM repeats span residues 623-662, 664-704, 706-746, and 748-787; these read KPPI…NLAA, EANQ…NLAM, ETNQ…NLCG, and DKLQ…NFAK.

The protein belongs to the TRAFAC class myosin-kinesin ATPase superfamily. Kinesin family. Ungrouped subfamily.

It localises to the cytoplasm. The protein localises to the cytoskeleton. In Oryza sativa subsp. japonica (Rice), this protein is Kinesin-like protein KIN-UB.